Consider the following 194-residue polypeptide: MSTTIDVPESSNVAKGKAVLVAPPRPGGWKKGVAIMDFILRLGAIAAALGAAATMGTSDQTLPFFTQFLQFEASYDSFTSFQFFVITMALVGGYLVLSLPFSFVAIIRPHAAGPRLFLIILDTVFLTLTTASGASAAAIVYLAHNGNQDSNWLAICNQFGDFCAQTSSAVVSSFVAVVVLVLLVVLSALALGKR.

Over 1–32 the chain is Cytoplasmic; sequence MSTTIDVPESSNVAKGKAVLVAPPRPGGWKKG. Residues 33-53 form a helical membrane-spanning segment; the sequence is VAIMDFILRLGAIAAALGAAA. The Extracellular portion of the chain corresponds to 54-82; the sequence is TMGTSDQTLPFFTQFLQFEASYDSFTSFQ. Residues 83–103 traverse the membrane as a helical segment; it reads FFVITMALVGGYLVLSLPFSF. Over 104–115 the chain is Cytoplasmic; the sequence is VAIIRPHAAGPR. The chain crosses the membrane as a helical span at residues 116–136; the sequence is LFLIILDTVFLTLTTASGASA. Residues 137-168 lie on the Extracellular side of the membrane; the sequence is AAIVYLAHNGNQDSNWLAICNQFGDFCAQTSS. The chain crosses the membrane as a helical span at residues 169 to 189; sequence AVVSSFVAVVVLVLLVVLSAL. At 190–194 the chain is on the cytoplasmic side; that stretch reads ALGKR.

The protein belongs to the Casparian strip membrane proteins (CASP) family. In terms of assembly, homodimer and heterodimers.

The protein localises to the cell membrane. Its function is as follows. Regulates membrane-cell wall junctions and localized cell wall deposition. Required for establishment of the Casparian strip membrane domain (CSD) and the subsequent formation of Casparian strips, a cell wall modification of the root endodermis that determines an apoplastic barrier between the intraorganismal apoplasm and the extraorganismal apoplasm and prevents lateral diffusion. The protein is Casparian strip membrane protein 2 of Glycine max (Soybean).